A 352-amino-acid polypeptide reads, in one-letter code: Biotin synthase (352 aa).

The Radical SAM core domain occupies 41 to 268 (NEVQVSTLLS…ASHVRLSAGR (228 aa)). Positions 56, 60, and 63 each coordinate [4Fe-4S] cluster. [2Fe-2S] cluster is bound by residues C100, C131, C191, and R263.

This sequence belongs to the radical SAM superfamily. Biotin synthase family. Homodimer. [4Fe-4S] cluster is required as a cofactor. [2Fe-2S] cluster serves as cofactor.

It catalyses the reaction (4R,5S)-dethiobiotin + (sulfur carrier)-SH + 2 reduced [2Fe-2S]-[ferredoxin] + 2 S-adenosyl-L-methionine = (sulfur carrier)-H + biotin + 2 5'-deoxyadenosine + 2 L-methionine + 2 oxidized [2Fe-2S]-[ferredoxin]. Its pathway is cofactor biosynthesis; biotin biosynthesis; biotin from 7,8-diaminononanoate: step 2/2. Its function is as follows. Catalyzes the conversion of dethiobiotin (DTB) to biotin by the insertion of a sulfur atom into dethiobiotin via a radical-based mechanism. The polypeptide is Biotin synthase (Marinobacter nauticus (strain ATCC 700491 / DSM 11845 / VT8) (Marinobacter aquaeolei)).